The primary structure comprises 218 residues: MRLMLLGGPGAGKGTQASLLINRYKIPQISTGDMLRAAIAKGTPLGLSAQKIMESGGLVSDDIIIGLVKERLKNPDCDRGFLFDGFPRTLVQAEALKDAEIHLDHVIEIAVDDEEIIERISGRRIHQPSGRVYHVVNQPPKNPGVDDITGEPLIQRDDDKEETIRKRLQVYHSQTAPLVQYYKEWAESGSKEAPKFHTISGTGTVDQIFDNIVTILET.

10-15 contributes to the ATP binding site; the sequence is GAGKGT. Residues 30 to 59 form an NMP region; that stretch reads STGDMLRAAIAKGTPLGLSAQKIMESGGLV. Residues Thr31, Arg36, 57-59, 85-88, and Gln92 each bind AMP; these read GLV and GFPR. Positions 122 to 159 are LID; it reads GRRIHQPSGRVYHVVNQPPKNPGVDDITGEPLIQRDDD. Residues Arg123 and 132–133 each bind ATP; that span reads VY. The AMP site is built by Arg156 and Arg167. Gly203 contacts ATP.

The protein belongs to the adenylate kinase family. As to quaternary structure, monomer.

It localises to the cytoplasm. It catalyses the reaction AMP + ATP = 2 ADP. The protein operates within purine metabolism; AMP biosynthesis via salvage pathway; AMP from ADP: step 1/1. Its function is as follows. Catalyzes the reversible transfer of the terminal phosphate group between ATP and AMP. Plays an important role in cellular energy homeostasis and in adenine nucleotide metabolism. This Legionella pneumophila (strain Lens) protein is Adenylate kinase.